The sequence spans 146 residues: MSINIDIKKITDLLNSSILFPDDVQELLREKYIVLERKSNGTPTVAHIYKTMARFDNKSIYRIAKFLFMNRPDVIKLLFLEDVEPLLPDKSINISINNTEYPQLEGPIGTKIALLELFNAFKTGISEPIPYYYLPLRKDINNIVTK.

The protein belongs to the orthopoxvirus OPG114 family. In terms of assembly, part of a complex composed of the kinase OPG054, OPG092, OPG100, OPG114, OPG115, OPG142 and OPG157.

It localises to the virion. Late protein which is part of a large complex required for early virion morphogenesis. This complex participates in the formation of virosomes and the incorporation of virosomal contents into nascent immature virions. This Homo sapiens (Human) protein is Core protein D2 (OPG114).